We begin with the raw amino-acid sequence, 435 residues long: Trigger factor (435 aa).

One can recognise a PPIase FKBP-type domain in the interval 163–248 (GELASVTFSA…VHAVKERKMP (86 aa)).

The protein belongs to the FKBP-type PPIase family. Tig subfamily.

The protein resides in the cytoplasm. It catalyses the reaction [protein]-peptidylproline (omega=180) = [protein]-peptidylproline (omega=0). Its function is as follows. Involved in protein export. Acts as a chaperone by maintaining the newly synthesized protein in an open conformation. Functions as a peptidyl-prolyl cis-trans isomerase. This is Trigger factor from Maridesulfovibrio salexigens (strain ATCC 14822 / DSM 2638 / NCIMB 8403 / VKM B-1763) (Desulfovibrio salexigens).